The sequence spans 247 residues: Carbonic anhydrase (247 aa).

The N-terminal stretch at 1–34 (MMFNKQIFTILILSLSLALAGSGCISEGAEDNVA) is a signal peptide. 93–95 (RSD) is a binding site for substrate. Catalysis depends on Glu96, which acts as the Proton donor/acceptor. 109–110 (QD) lines the substrate pocket. His115 contacts Zn(2+). Residue Glu118 is part of the active site. 2 residues coordinate Zn(2+): His151 and His156. Asn236 lines the substrate pocket.

Belongs to the gamma-class carbonic anhydrase family. Homotrimer. The cofactor is Zn(2+).

It is found in the secreted. The catalysed reaction is hydrogencarbonate + H(+) = CO2 + H2O. In terms of biological role, reversible hydration of carbon dioxide. Important for growth on acetate. As a probably extracellular enzyme, it may support a H(+)/CH(3)COO(-) symport mechanism and/or conversion of CO(2) to HCO(3)(-), removing excess CO(2) produced by growth on acetate. The polypeptide is Carbonic anhydrase (Methanosarcina thermophila (strain ATCC 43570 / DSM 1825 / OCM 12 / VKM B-1830 / TM-1)).